We begin with the raw amino-acid sequence, 1185 residues long: Ubiquitin carboxyl-terminal hydrolase 36 (1185 aa).

Polar residues predominate over residues 126–169 (TGKALSSNGHDNTNGVNGSSAATVNGNRKQTVEQSNQNSTTNPN). Residues 126–174 (TGKALSSNGHDNTNGVNGSSAATVNGNRKQTVEQSNQNSTTNPNELPKP) form a disordered region. The region spanning 199–509 (AGMLNVGNTC…NAYIMFYELD (311 aa)) is the USP domain. The active-site Nucleophile is C208. The active-site Proton acceptor is H468. Residues S552 and S554 each carry the phosphoserine modification. Low complexity predominate over residues 642 to 658 (ANSNKSSCNNNTLTTNS). Disordered stretches follow at residues 642-804 (ANSN…TDAI), 818-975 (HRAT…YQSE), 1056-1122 (APTL…GSFP), and 1136-1185 (NKFK…QQQS). Over residues 670–683 (SDEEDEDEDSDDDV) the composition is skewed to acidic residues. T716 carries the post-translational modification Phosphothreonine. Residues S726 and S728 each carry the phosphoserine modification. 2 stretches are compositionally biased toward low complexity: residues 778–797 (KSNGSGNESSTSTSIKSNNN) and 836–853 (QQQQVTKKPSNSSSSLIS). At S867 the chain carries Phosphoserine. Phosphothreonine is present on T870. Position 873 is a phosphoserine (S873). Positions 891–920 (DDNDDDDEDADEEDDADADAEQEEYDDEVV) are enriched in acidic residues. 2 stretches are compositionally biased toward polar residues: residues 924 to 942 (TTPSITTKNLNNPFASKPS) and 959 to 975 (SAKSAQTPRVGNGYQSE). A Phosphothreonine modification is found at T925. Over residues 1062 to 1071 (EAREQRKRDA) the composition is skewed to basic and acidic residues. Low complexity-rich tracts occupy residues 1151-1161 (QQQRALQRHLA) and 1172-1185 (QSTGHQQQQQQQQS).

Belongs to the peptidase C19 family. As to quaternary structure, interacts with atms/PAF1, but not with CycT.

It is found in the nucleus. It localises to the nucleolus. It carries out the reaction Thiol-dependent hydrolysis of ester, thioester, amide, peptide and isopeptide bonds formed by the C-terminal Gly of ubiquitin (a 76-residue protein attached to proteins as an intracellular targeting signal).. Functionally, required for maintaining multiple types of adult stem cells, including male and female germline, epithelial follicle cell and intestinal stem cells. May function as a transcriptional repressor by continually deubiquiting histone H2B at the promoters of genes critical for cellular differentiation, thereby preventing histone H3 'Lys-4' trimethylation (H3K4). Controls selective autophagy activation by ubiquitinated proteins. This Drosophila mojavensis (Fruit fly) protein is Ubiquitin carboxyl-terminal hydrolase 36 (Usp36).